Reading from the N-terminus, the 403-residue chain is GPI-N-acetylgalactosamine transferase PGAP4 (403 aa).

Over 1 to 22 (MSTSTSPAAMLLRRLRRLSWGS) the chain is Cytoplasmic. The helical transmembrane segment at 23–43 (TAVQLFILTVVTFGLLAPLAC) threads the bilayer. The Lumenal portion of the chain corresponds to 44 to 259 (HRLLHSYFYL…RLQHYTNPEP (216 aa)). Valine 109 is a binding site for UDP-N-acetyl-alpha-D-galactosamine. Intrachain disulfides connect cysteine 132–cysteine 136 and cysteine 144–cysteine 194. The DXD motif signature appears at 211–213 (EDD). Residues 260–280 (MRILEWVGVGMLLGPLLTWIY) traverse the membrane as a helical segment. Topologically, residues 281–287 (MRFASRP) are cytoplasmic. Residues 288-308 (GFSWPVMLFFSLYSMGLVELV) form a helical membrane-spanning segment. Residues 309–403 (GRHYFLELRR…LRYNFHPSLL (95 aa)) lie on the Lumenal side of the membrane. Cysteine 332 and cysteine 333 are joined by a disulfide. UDP-N-acetyl-alpha-D-galactosamine is bound by residues threonine 334, proline 335, and lysine 362.

It belongs to the PGAP4 family. In terms of processing, glycosylated.

The protein localises to the golgi apparatus membrane. Golgi-resident glycosylphosphatidylinositol (GPI)-N-acetylgalactosamine transferase that catalyzes the N-acetyl-beta-D-galactosamine transfer from an UDP-N-acetyl-alpha-D-galactosamine to the 4-OH-position of first mannose of the glycosylphosphatidylinositol (GPI) of a GPI-anchored protein (GPI-AP). This modification occurs after the fatty acid remodeling step of the GPI-anchor maturation. The protein is GPI-N-acetylgalactosamine transferase PGAP4 of Pongo abelii (Sumatran orangutan).